We begin with the raw amino-acid sequence, 280 residues long: Ribosomal protein L11 methyltransferase (280 aa).

S-adenosyl-L-methionine-binding residues include threonine 130, glycine 151, aspartate 172, and asparagine 213.

The protein belongs to the methyltransferase superfamily. PrmA family.

The protein resides in the cytoplasm. It catalyses the reaction L-lysyl-[protein] + 3 S-adenosyl-L-methionine = N(6),N(6),N(6)-trimethyl-L-lysyl-[protein] + 3 S-adenosyl-L-homocysteine + 3 H(+). Functionally, methylates ribosomal protein L11. The polypeptide is Ribosomal protein L11 methyltransferase (Nitratiruptor sp. (strain SB155-2)).